The chain runs to 459 residues: Argininosuccinate lyase (459 aa).

This sequence belongs to the lyase 1 family. Argininosuccinate lyase subfamily.

It is found in the cytoplasm. It carries out the reaction 2-(N(omega)-L-arginino)succinate = fumarate + L-arginine. The protein operates within amino-acid biosynthesis; L-arginine biosynthesis; L-arginine from L-ornithine and carbamoyl phosphate: step 3/3. The chain is Argininosuccinate lyase from Lactococcus lactis subsp. cremoris (strain SK11).